A 231-amino-acid polypeptide reads, in one-letter code: Probable septum site-determining protein MinC (231 aa).

The disordered stretch occupies residues 102-125 (KEKAPRPAPAPQAPAQNTTPVTKT).

This sequence belongs to the MinC family. Interacts with MinD and FtsZ.

Cell division inhibitor that blocks the formation of polar Z ring septums. Rapidly oscillates between the poles of the cell to destabilize FtsZ filaments that have formed before they mature into polar Z rings. Prevents FtsZ polymerization. This chain is Probable septum site-determining protein MinC, found in Escherichia coli O139:H28 (strain E24377A / ETEC).